A 103-amino-acid polypeptide reads, in one-letter code: Large ribosomal subunit protein bL21 (103 aa).

It belongs to the bacterial ribosomal protein bL21 family. Part of the 50S ribosomal subunit. Contacts protein L20.

In terms of biological role, this protein binds to 23S rRNA in the presence of protein L20. The polypeptide is Large ribosomal subunit protein bL21 (Herminiimonas arsenicoxydans).